Here is an 81-residue protein sequence, read N- to C-terminus: Cytotoxin 4a (81 aa).

A signal peptide spans 1 to 21 (MKTLLLTLVVVTIVCLDLGYT). Disulfide bonds link Cys-24–Cys-42, Cys-35–Cys-59, Cys-63–Cys-74, and Cys-75–Cys-80.

The protein belongs to the three-finger toxin family. Short-chain subfamily. Type IA cytotoxin sub-subfamily. As to quaternary structure, monomer in solution; Homodimer and oligomer in the presence of negatively charged lipids forming a pore with a size ranging between 20 and 30 Angstroms. Expressed by the venom gland.

The protein resides in the secreted. The protein localises to the target cell membrane. Shows cytolytic activity on many different cells by forming pore in lipid membranes. In vivo, increases heart rate or kills the animal by cardiac arrest. In addition, it binds to heparin with high affinity, interacts with Kv channel-interacting protein 1 (KCNIP1) in a calcium-independent manner, and binds to integrin alpha-V/beta-3 (ITGAV/ITGB3) with moderate affinity. This Naja sputatrix (Malayan spitting cobra) protein is Cytotoxin 4a.